A 562-amino-acid chain; its full sequence is Acetolactate synthase isozyme 1 large subunit (562 aa).

E60 lines the thiamine diphosphate pocket. FAD-binding positions include R162, 264–285 (HGVR…LGAR), and 307–326 (DIDR…IQAD). Residues 393-473 (QHQMWTAQAY…VKIILMNNEA (81 aa)) form a thiamine pyrophosphate binding region. Mg(2+)-binding residues include D444 and N471.

Belongs to the TPP enzyme family. In terms of assembly, dimer of large and small chains. Requires Mg(2+) as cofactor. Thiamine diphosphate is required as a cofactor.

The catalysed reaction is 2 pyruvate + H(+) = (2S)-2-acetolactate + CO2. It functions in the pathway amino-acid biosynthesis; L-isoleucine biosynthesis; L-isoleucine from 2-oxobutanoate: step 1/4. The protein operates within amino-acid biosynthesis; L-valine biosynthesis; L-valine from pyruvate: step 1/4. In Escherichia coli (strain K12), this protein is Acetolactate synthase isozyme 1 large subunit (ilvB).